The sequence spans 123 residues: Ragulator complex protein LAMTOR3-A (123 aa).

This sequence belongs to the LAMTOR3 family. In terms of assembly, part of the Ragulator complex composed of lamtor1, lamtor2, lamtor3, lamtor4 and lamtor5. The Ragulator complex interacts with slc38a9; the probable amino acid sensor. Component of the lysosomal folliculin complex (LFC).

The protein localises to the late endosome membrane. In terms of biological role, as part of the Ragulator complex it is involved in amino acid sensing and activation of mTORC1, a signaling complex promoting cell growth in response to growth factors, energy levels, and amino acids. Activated by amino acids through a mechanism involving the lysosomal V-ATPase, the Ragulator plays a dual role for the small GTPases Rag (RagA/RRAGA, RagB/RRAGB, RagC/RRAGC and/or RagD/RRAGD): it (1) acts as a guanine nucleotide exchange factor (GEF), activating the small GTPases Rag and (2) mediates recruitment of Rag GTPases to the lysosome membrane. Activated Ragulator and Rag GTPases function as a scaffold recruiting mTORC1 to lysosomes where it is in turn activated. The chain is Ragulator complex protein LAMTOR3-A (lamtor3-a) from Xenopus laevis (African clawed frog).